Here is a 309-residue protein sequence, read N- to C-terminus: NADH-cytochrome b5 reductase 2 (309 aa).

Residues 3 to 23 form a helical membrane-spanning segment; that stretch reads ILTAPVLIGVSIVVITVLYLF. One can recognise an FAD-binding FR-type domain in the interval 48-160; that stretch reads SVKYPLPLIE…RGPNGLLVYN (113 aa). Residues 140 to 170 and 179 to 214 each bind FAD; these read DNMK…IRPD and KFKH…VCSL.

Belongs to the flavoprotein pyridine nucleotide cytochrome reductase family. It depends on FAD as a cofactor.

It localises to the membrane. The catalysed reaction is 2 Fe(III)-[cytochrome b5] + NADH = 2 Fe(II)-[cytochrome b5] + NAD(+) + H(+). Its function is as follows. NADH-cytochrome b5 reductases are involved in desaturation and elongation of fatty acids, cholesterol biosynthesis and drug metabolism. The protein is NADH-cytochrome b5 reductase 2 (cyb5r2) of Danio rerio (Zebrafish).